A 177-amino-acid polypeptide reads, in one-letter code: Transcriptional regulator MET31 (177 aa).

The C2H2-type zinc finger occupies Tyr-95–His-117.

In terms of assembly, interacts with MET4 and MET28.

It localises to the cytoplasm. Its subcellular location is the nucleus. Functionally, auxiliary transcriptional regulator of sulfur amino acid metabolism. Involved in the transcriptional activation of MET28. The sequence is that of Transcriptional regulator MET31 (MET31) from Saccharomyces cerevisiae (strain ATCC 204508 / S288c) (Baker's yeast).